The sequence spans 238 residues: DNA repair protein RecO (238 aa).

It belongs to the RecO family.

In terms of biological role, involved in DNA repair and RecF pathway recombination. This Aliivibrio salmonicida (strain LFI1238) (Vibrio salmonicida (strain LFI1238)) protein is DNA repair protein RecO.